Consider the following 589-residue polypeptide: Mini-chromosome maintenance complex-binding protein (589 aa).

The disordered stretch occupies residues 163–211; the sequence is VDEEMTDSMDSSTLEAGRNGSPFKKMKVGEATSSASESQVPQTSGIPPA. The segment covering 193–207 has biased composition (polar residues); it reads ATSSASESQVPQTSG.

It belongs to the MCMBP family. Interacts with the MCM complex.

Its subcellular location is the nucleus. Functionally, associated component of the MCM complex that acts as a regulator of DNA replication. Binds to the MCM complex during late S phase and may act by promoting the disassembly of the MCM complex from chromatin. Required for sister chromatid cohesion. The polypeptide is Mini-chromosome maintenance complex-binding protein (ETG1) (Arabidopsis thaliana (Mouse-ear cress)).